A 341-amino-acid polypeptide reads, in one-letter code: tRNA N6-adenosine threonylcarbamoyltransferase (341 aa).

The Fe cation site is built by His111 and His115. Substrate contacts are provided by residues 134–138 (LVSGG), Asp167, Gly180, and Asn276. Fe cation is bound at residue Asp304.

This sequence belongs to the KAE1 / TsaD family. It depends on Fe(2+) as a cofactor.

It is found in the cytoplasm. It carries out the reaction L-threonylcarbamoyladenylate + adenosine(37) in tRNA = N(6)-L-threonylcarbamoyladenosine(37) in tRNA + AMP + H(+). Required for the formation of a threonylcarbamoyl group on adenosine at position 37 (t(6)A37) in tRNAs that read codons beginning with adenine. Is involved in the transfer of the threonylcarbamoyl moiety of threonylcarbamoyl-AMP (TC-AMP) to the N6 group of A37, together with TsaE and TsaB. TsaD likely plays a direct catalytic role in this reaction. In Stutzerimonas stutzeri (strain A1501) (Pseudomonas stutzeri), this protein is tRNA N6-adenosine threonylcarbamoyltransferase.